The following is a 771-amino-acid chain: U3 small nucleolar RNA-associated protein 14 homolog A (771 aa).

A disordered region spans residues 23–49 (PKDYLLSESEDEGDNDGERKHQKLLEA). Phosphoserine occurs at positions 29, 31, 52, 77, and 81. Positions 40-67 (ERKHQKLLEAISSLDGKNRRKLAERSEA) form a coiled coil. K122 participates in a covalent cross-link: Glycyl lysine isopeptide (Lys-Gly) (interchain with G-Cter in SUMO2). Position 205 is a phosphothreonine (T205). Coiled-coil stretches lie at residues 216–290 (SLEE…EKAR) and 317–347 (LEAR…EEEE). Disordered regions lie at residues 334 to 355 (TQKL…DVEE) and 367 to 557 (MNAD…KKEQ). Acidic residues predominate over residues 342 to 355 (ESEEEEGGTEDVEE). Basic and acidic residues predominate over residues 399–436 (LEAHGVSESEGEERPVAEEEILLREFEERRSLRKRSEL). Phosphoserine occurs at positions 405 and 407. R433 carries the citrulline modification. A phosphoserine mark is found at S437 and S445. K449 participates in a covalent cross-link: Glycyl lysine isopeptide (Lys-Gly) (interchain with G-Cter in SUMO2). At S453 the chain carries Phosphoserine. The segment covering 504–529 (RPERVQTLEELEELGKEECFQNKELP) has biased composition (basic and acidic residues). A Glycyl lysine isopeptide (Lys-Gly) (interchain with G-Cter in SUMO2) cross-link involves residue K519. Residues 535–544 (GQQSERTPNN) show a composition bias toward polar residues. The span at 547–557 (DAPKEKKKKEQ) shows a compositional bias: basic and acidic residues. The residue at position 569 (S569) is a Phosphoserine. The residue at position 589 (R589) is a Citrulline. K733 participates in a covalent cross-link: Glycyl lysine isopeptide (Lys-Gly) (interchain with G-Cter in SUMO2). The segment covering 740-751 (RSSSRSDLSVIQ) has biased composition (polar residues). The disordered stretch occupies residues 740 to 771 (RSSSRSDLSVIQRNPKRITTRHKKQLKKCSVD). The segment covering 753 to 771 (NPKRITTRHKKQLKKCSVD) has biased composition (basic residues).

The protein belongs to the UTP14 family. As to quaternary structure, interacts with DHX37. Post-translationally, citrullinated by PADI4. As to expression, ubiquitously expressed.

It is found in the nucleus. It localises to the nucleolus. May be required for ribosome biogenesis. The sequence is that of U3 small nucleolar RNA-associated protein 14 homolog A (UTP14A) from Homo sapiens (Human).